The primary structure comprises 130 residues: Small ribosomal subunit protein uS9 (130 aa).

The protein belongs to the universal ribosomal protein uS9 family.

The chain is Small ribosomal subunit protein uS9 from Clostridioides difficile (strain 630) (Peptoclostridium difficile).